Consider the following 385-residue polypeptide: Guanine nucleotide-binding protein alpha-5 subunit (385 aa).

The N-myristoyl glycine moiety is linked to residue glycine 2. A lipid anchor (S-palmitoyl cysteine) is attached at cysteine 6. In terms of domain architecture, G-alpha spans 32–385; that stretch reads RKIKMLLLGI…NKNIETLSLE (354 aa). Residues 35-48 form a G1 motif region; that stretch reads KMLLLGISDSGKST. GTP is bound by residues 40 to 47, 174 to 180, 199 to 203, 298 to 301, and alanine 357; these read GISDSGKS, IHMRQTT, DVGGQ, and NKID. 2 residues coordinate Mg(2+): serine 47 and threonine 180. Positions 172–180 are G2 motif; sequence DLIHMRQTT. The segment at 195–204 is G3 motif; it reads IRLIDVGGQK. The tract at residues 294–301 is G4 motif; it reads MLFLNKID. Residues 355–360 are G5 motif; that stretch reads TQATIT.

The protein belongs to the G-alpha family. As to quaternary structure, g proteins are composed of 3 units; alpha, beta and gamma. The alpha chain contains the guanine nucleotide binding site.

In terms of biological role, guanine nucleotide-binding proteins (G proteins) are involved as modulators or transducers in various transmembrane signaling systems. The protein is Guanine nucleotide-binding protein alpha-5 subunit (gpa-5) of Caenorhabditis briggsae.